The sequence spans 256 residues: tRNA pseudouridine synthase A (256 aa).

Asp-55 acts as the Nucleophile in catalysis. Residue Tyr-113 coordinates substrate.

It belongs to the tRNA pseudouridine synthase TruA family. In terms of assembly, homodimer.

The catalysed reaction is uridine(38/39/40) in tRNA = pseudouridine(38/39/40) in tRNA. Its function is as follows. Formation of pseudouridine at positions 38, 39 and 40 in the anticodon stem and loop of transfer RNAs. This chain is tRNA pseudouridine synthase A, found in Limosilactobacillus reuteri (strain DSM 20016) (Lactobacillus reuteri).